We begin with the raw amino-acid sequence, 302 residues long: 4-hydroxy-tetrahydrodipicolinate synthase (302 aa).

T55 serves as a coordination point for pyruvate. Catalysis depends on Y144, which acts as the Proton donor/acceptor. The active-site Schiff-base intermediate with substrate is K172. Residue V214 coordinates pyruvate.

This sequence belongs to the DapA family. As to quaternary structure, homotetramer; dimer of dimers.

The protein localises to the cytoplasm. It catalyses the reaction L-aspartate 4-semialdehyde + pyruvate = (2S,4S)-4-hydroxy-2,3,4,5-tetrahydrodipicolinate + H2O + H(+). Its pathway is amino-acid biosynthesis; L-lysine biosynthesis via DAP pathway; (S)-tetrahydrodipicolinate from L-aspartate: step 3/4. Its function is as follows. Catalyzes the condensation of (S)-aspartate-beta-semialdehyde [(S)-ASA] and pyruvate to 4-hydroxy-tetrahydrodipicolinate (HTPA). In Synechococcus sp. (strain CC9311), this protein is 4-hydroxy-tetrahydrodipicolinate synthase.